The following is a 479-amino-acid chain: Glycogen synthase (479 aa).

Lysine 15 is a binding site for ADP-alpha-D-glucose.

The protein belongs to the glycosyltransferase 1 family. Bacterial/plant glycogen synthase subfamily.

The catalysed reaction is [(1-&gt;4)-alpha-D-glucosyl](n) + ADP-alpha-D-glucose = [(1-&gt;4)-alpha-D-glucosyl](n+1) + ADP + H(+). The protein operates within glycan biosynthesis; glycogen biosynthesis. Synthesizes alpha-1,4-glucan chains using ADP-glucose. This chain is Glycogen synthase, found in Pectobacterium carotovorum subsp. carotovorum (strain PC1).